A 215-amino-acid chain; its full sequence is Glutathione S-transferase F9 (215 aa).

A GST N-terminal domain is found at 2–81 (VLKVYGPHFA…YVAEKYRSQG (80 aa)). 11-12 (AS) is a binding site for glutathione. Ser-12 carries the phosphoserine modification. Met-35 is subject to Methionine sulfoxide. Glutathione contacts are provided by residues 39–40 (HK), 52–53 (TV), and 65–66 (ES). Positions 88 to 215 (TVEDRGQVEQ…ETVAKYSFPA (128 aa)) constitute a GST C-terminal domain. Met-118, Met-123, and Met-184 each carry methionine sulfoxide.

It belongs to the GST superfamily. Phi family. Oxidated at Met-35, Met-118, Met-123 and Met-184 in oxidative stress conditions (e.g. hydrogen peroxide H(2)O(2)).

It localises to the cytoplasm. The protein resides in the cytosol. It catalyses the reaction RX + glutathione = an S-substituted glutathione + a halide anion + H(+). With respect to regulation, redox-regulated enzyme; in oxidative stress conditions methionine oxidation ensure a thermodynamic and structural compensatory mechanism to guarantee H(2)O(2) peroxidase activity despite transferase activity inhibition. Functionally, in vitro, possesses glutathione S-transferase activity toward 1-chloro-2,4-dinitrobenzene (CDNB) and benzyl isothiocyanate (BITC), and glutathione peroxidase activity toward cumene hydroperoxide and linoleic acid-13-hydroperoxide. May be involved in the conjugation of reduced glutathione to a wide number of exogenous and endogenous hydrophobic electrophiles and have a detoxification role against certain herbicides. This chain is Glutathione S-transferase F9, found in Arabidopsis thaliana (Mouse-ear cress).